Here is a 180-residue protein sequence, read N- to C-terminus: Minor allergen Can f 2 (180 aa).

An N-terminal signal peptide occupies residues 1 to 18 (MQLLLLTVGLALICGLQA). Asn45 carries an N-linked (GlcNAc...) asparagine glycan. A disulfide bridge links Cys82 with Cys175.

The protein belongs to the calycin superfamily. Lipocalin family. Tongue epithelial tissue and parotid gland.

The protein resides in the secreted. The chain is Minor allergen Can f 2 from Canis lupus familiaris (Dog).